Consider the following 43-residue polypeptide: Gene 67 protein (43 aa).

This chain is Gene 67 protein (67), found in Mycobacterium phage L5 (Mycobacteriophage L5).